Reading from the N-terminus, the 370-residue chain is Phosphate acyltransferase (370 aa).

It belongs to the PlsX family. In terms of assembly, homodimer. Probably interacts with PlsY.

The protein localises to the cytoplasm. The enzyme catalyses a fatty acyl-[ACP] + phosphate = an acyl phosphate + holo-[ACP]. The protein operates within lipid metabolism; phospholipid metabolism. Its function is as follows. Catalyzes the reversible formation of acyl-phosphate (acyl-PO(4)) from acyl-[acyl-carrier-protein] (acyl-ACP). This enzyme utilizes acyl-ACP as fatty acyl donor, but not acyl-CoA. This is Phosphate acyltransferase from Paracoccus denitrificans (strain Pd 1222).